A 256-amino-acid polypeptide reads, in one-letter code: Pre-mRNA-splicing factor CWC24 (256 aa).

Residues methionine 1–alanine 80 form a disordered region. The segment covering serine 18–alanine 34 has biased composition (low complexity). Residues arginine 45–isoleucine 66 show a composition bias toward polar residues. Positions aspartate 67–alanine 80 are enriched in basic and acidic residues. Residues aspartate 131–glutamate 159 form a C3H1-type zinc finger. A compositionally biased stretch (basic and acidic residues) spans isoleucine 173–arginine 182. The segment at isoleucine 173–serine 200 is disordered. An RING-type zinc finger spans residues cysteine 206 to glycine 244.

This sequence belongs to the CWC24 family. In terms of assembly, associated with the spliceosome.

The protein resides in the nucleus. Involved in pre-mRNA splicing. In Yarrowia lipolytica (strain CLIB 122 / E 150) (Yeast), this protein is Pre-mRNA-splicing factor CWC24 (CWC24).